We begin with the raw amino-acid sequence, 427 residues long: Enolase (427 aa).

Residue Gln163 coordinates (2R)-2-phosphoglycerate. The active-site Proton donor is the Glu205. Asp242, Glu285, and Asp312 together coordinate Mg(2+). Residues Lys337, Arg366, Ser367, and Lys388 each contribute to the (2R)-2-phosphoglycerate site. Lys337 (proton acceptor) is an active-site residue.

Belongs to the enolase family. Requires Mg(2+) as cofactor.

Its subcellular location is the cytoplasm. The protein localises to the secreted. It localises to the cell surface. It carries out the reaction (2R)-2-phosphoglycerate = phosphoenolpyruvate + H2O. The protein operates within carbohydrate degradation; glycolysis; pyruvate from D-glyceraldehyde 3-phosphate: step 4/5. Catalyzes the reversible conversion of 2-phosphoglycerate (2-PG) into phosphoenolpyruvate (PEP). It is essential for the degradation of carbohydrates via glycolysis. This chain is Enolase, found in Beijerinckia indica subsp. indica (strain ATCC 9039 / DSM 1715 / NCIMB 8712).